A 353-amino-acid polypeptide reads, in one-letter code: Paraneoplastic antigen Ma1 homolog (353 aa).

This sequence belongs to the PNMA family.

It localises to the nucleus. It is found in the nucleolus. The polypeptide is Paraneoplastic antigen Ma1 homolog (PNMA1) (Bos taurus (Bovine)).